The primary structure comprises 200 residues: ATP-dependent Clp protease proteolytic subunit 3 (200 aa).

Ser101 acts as the Nucleophile in catalysis. His126 is a catalytic residue.

The protein belongs to the peptidase S14 family. As to quaternary structure, fourteen ClpP subunits assemble into 2 heptameric rings which stack back to back to give a disk-like structure with a central cavity, resembling the structure of eukaryotic proteasomes.

It localises to the cytoplasm. It carries out the reaction Hydrolysis of proteins to small peptides in the presence of ATP and magnesium. alpha-casein is the usual test substrate. In the absence of ATP, only oligopeptides shorter than five residues are hydrolyzed (such as succinyl-Leu-Tyr-|-NHMec, and Leu-Tyr-Leu-|-Tyr-Trp, in which cleavage of the -Tyr-|-Leu- and -Tyr-|-Trp bonds also occurs).. Functionally, cleaves peptides in various proteins in a process that requires ATP hydrolysis. Has a chymotrypsin-like activity. Plays a major role in the degradation of misfolded proteins. The polypeptide is ATP-dependent Clp protease proteolytic subunit 3 (Parasynechococcus marenigrum (strain WH8102)).